Reading from the N-terminus, the 323-residue chain is Pantothenate kinase (323 aa).

Residue 101-108 (GSVAVGKS) coordinates ATP.

This sequence belongs to the prokaryotic pantothenate kinase family.

The protein resides in the cytoplasm. The catalysed reaction is (R)-pantothenate + ATP = (R)-4'-phosphopantothenate + ADP + H(+). Its pathway is cofactor biosynthesis; coenzyme A biosynthesis; CoA from (R)-pantothenate: step 1/5. In Paenarthrobacter aurescens (strain TC1), this protein is Pantothenate kinase.